Reading from the N-terminus, the 488-residue chain is Probable glycine dehydrogenase (decarboxylating) subunit 2 (488 aa).

Lys274 carries the post-translational modification N6-(pyridoxal phosphate)lysine.

This sequence belongs to the GcvP family. C-terminal subunit subfamily. In terms of assembly, the glycine cleavage system is composed of four proteins: P, T, L and H. In this organism, the P 'protein' is a heterodimer of two subunits. The cofactor is pyridoxal 5'-phosphate.

The catalysed reaction is N(6)-[(R)-lipoyl]-L-lysyl-[glycine-cleavage complex H protein] + glycine + H(+) = N(6)-[(R)-S(8)-aminomethyldihydrolipoyl]-L-lysyl-[glycine-cleavage complex H protein] + CO2. The glycine cleavage system catalyzes the degradation of glycine. The P protein binds the alpha-amino group of glycine through its pyridoxal phosphate cofactor; CO(2) is released and the remaining methylamine moiety is then transferred to the lipoamide cofactor of the H protein. The polypeptide is Probable glycine dehydrogenase (decarboxylating) subunit 2 (Listeria innocua serovar 6a (strain ATCC BAA-680 / CLIP 11262)).